A 597-amino-acid polypeptide reads, in one-letter code: Myrcene synthase, chloroplastic (597 aa).

The transit peptide at 1-56 (MALKLLTSLPMYNFSRVPVSSKDPILLVTSRTRNGYLARPVQCMVANKVSTSPDIL) directs the protein to the chloroplast. (2E)-geranyl diphosphate contacts are provided by R310, D347, D351, R488, and D491. Mg(2+)-binding residues include D347 and D351. The DDXXD motif motif lies at 347-351 (DDVYD). Residues D491, T495, and E499 each contribute to the Mg(2+) site.

This sequence belongs to the terpene synthase family. Tpsb subfamily. Mg(2+) serves as cofactor. Requires Mn(2+) as cofactor.

Its subcellular location is the plastid. It is found in the chloroplast. It carries out the reaction (2E)-geranyl diphosphate = beta-myrcene + diphosphate. Involved in monoterpene (C10) biosynthesis. The major product is myrcene followed by minor amounts (1.2%) of the cyclic monoterpene limonene. This is Myrcene synthase, chloroplastic from Quercus ilex (Holly oak).